The sequence spans 430 residues: Enolase (430 aa).

Q167 is a binding site for (2R)-2-phosphoglycerate. The Proton donor role is filled by E209. Mg(2+) contacts are provided by D246, E289, and D316. 4 residues coordinate (2R)-2-phosphoglycerate: K341, R370, S371, and K392. K341 acts as the Proton acceptor in catalysis.

Belongs to the enolase family. In terms of assembly, component of the RNA degradosome, a multiprotein complex involved in RNA processing and mRNA degradation. It depends on Mg(2+) as a cofactor.

Its subcellular location is the cytoplasm. It is found in the secreted. The protein localises to the cell surface. It carries out the reaction (2R)-2-phosphoglycerate = phosphoenolpyruvate + H2O. Its pathway is carbohydrate degradation; glycolysis; pyruvate from D-glyceraldehyde 3-phosphate: step 4/5. Its function is as follows. Catalyzes the reversible conversion of 2-phosphoglycerate (2-PG) into phosphoenolpyruvate (PEP). It is essential for the degradation of carbohydrates via glycolysis. The polypeptide is Enolase (Idiomarina loihiensis (strain ATCC BAA-735 / DSM 15497 / L2-TR)).